A 455-amino-acid polypeptide reads, in one-letter code: Bifunctional protein GlmU (455 aa).

A pyrophosphorylase region spans residues 1 to 225 (MEVVILAAGQ…IWETLGVNSK (225 aa)). UDP-N-acetyl-alpha-D-glucosamine contacts are provided by residues 6–9 (LAAG), Lys-20, Gln-71, 76–77 (GT), 98–100 (YGD), Gly-135, Glu-150, Asn-165, and Asn-223. Residue Asp-100 participates in Mg(2+) binding. A Mg(2+)-binding site is contributed by Asn-223. The interval 226–246 (AQLAELERLHQRNIATRLMED) is linker. The interval 247-455 (GVTLFDPSRI…KRPVKKKAGE (209 aa)) is N-acetyltransferase. Arg-329 and Lys-347 together coordinate UDP-N-acetyl-alpha-D-glucosamine. The active-site Proton acceptor is the His-359. Residues Tyr-362 and Asn-373 each contribute to the UDP-N-acetyl-alpha-D-glucosamine site. Residues Ala-376, 382–383 (NY), Ser-401, Ala-419, and Arg-436 contribute to the acetyl-CoA site.

This sequence in the N-terminal section; belongs to the N-acetylglucosamine-1-phosphate uridyltransferase family. In the C-terminal section; belongs to the transferase hexapeptide repeat family. As to quaternary structure, homotrimer. Requires Mg(2+) as cofactor.

It is found in the cytoplasm. The enzyme catalyses alpha-D-glucosamine 1-phosphate + acetyl-CoA = N-acetyl-alpha-D-glucosamine 1-phosphate + CoA + H(+). The catalysed reaction is N-acetyl-alpha-D-glucosamine 1-phosphate + UTP + H(+) = UDP-N-acetyl-alpha-D-glucosamine + diphosphate. It participates in nucleotide-sugar biosynthesis; UDP-N-acetyl-alpha-D-glucosamine biosynthesis; N-acetyl-alpha-D-glucosamine 1-phosphate from alpha-D-glucosamine 6-phosphate (route II): step 2/2. The protein operates within nucleotide-sugar biosynthesis; UDP-N-acetyl-alpha-D-glucosamine biosynthesis; UDP-N-acetyl-alpha-D-glucosamine from N-acetyl-alpha-D-glucosamine 1-phosphate: step 1/1. Its pathway is bacterial outer membrane biogenesis; LPS lipid A biosynthesis. Catalyzes the last two sequential reactions in the de novo biosynthetic pathway for UDP-N-acetylglucosamine (UDP-GlcNAc). The C-terminal domain catalyzes the transfer of acetyl group from acetyl coenzyme A to glucosamine-1-phosphate (GlcN-1-P) to produce N-acetylglucosamine-1-phosphate (GlcNAc-1-P), which is converted into UDP-GlcNAc by the transfer of uridine 5-monophosphate (from uridine 5-triphosphate), a reaction catalyzed by the N-terminal domain. The polypeptide is Bifunctional protein GlmU (Aromatoleum aromaticum (strain DSM 19018 / LMG 30748 / EbN1) (Azoarcus sp. (strain EbN1))).